A 151-amino-acid chain; its full sequence is Chaperonin GroEL (151 aa).

41–45 (DGTTT) contacts ATP.

The protein belongs to the chaperonin (HSP60) family. As to quaternary structure, forms a cylinder of 14 subunits composed of two heptameric rings stacked back-to-back. Interacts with the co-chaperonin GroES.

The protein localises to the cytoplasm. The enzyme catalyses ATP + H2O + a folded polypeptide = ADP + phosphate + an unfolded polypeptide.. In terms of biological role, together with its co-chaperonin GroES, plays an essential role in assisting protein folding. The GroEL-GroES system forms a nano-cage that allows encapsulation of the non-native substrate proteins and provides a physical environment optimized to promote and accelerate protein folding. This is Chaperonin GroEL from Mycobacterium avium.